We begin with the raw amino-acid sequence, 96 residues long: Co-chaperonin GroES (96 aa).

It belongs to the GroES chaperonin family. Heptamer of 7 subunits arranged in a ring. Interacts with the chaperonin GroEL.

Its subcellular location is the cytoplasm. Its function is as follows. Together with the chaperonin GroEL, plays an essential role in assisting protein folding. The GroEL-GroES system forms a nano-cage that allows encapsulation of the non-native substrate proteins and provides a physical environment optimized to promote and accelerate protein folding. GroES binds to the apical surface of the GroEL ring, thereby capping the opening of the GroEL channel. The protein is Co-chaperonin GroES of Histophilus somni (strain 129Pt) (Haemophilus somnus).